We begin with the raw amino-acid sequence, 424 residues long: Tyrosine--tRNA ligase (424 aa).

Y37 contributes to the L-tyrosine binding site. Positions 42-51 (ITADSLHVGH) match the 'HIGH' region motif. L-tyrosine is bound by residues Y175 and Q179. The 'KMSKS' region motif lies at 235–239 (KFGKT). K238 provides a ligand contact to ATP. The 59-residue stretch at 356–414 (GNLQQLLVYSRLALSRSHAKSMIVSNSVRINNIIQNNPFYILCNRDKMYHKYTLLSRGK) folds into the S4 RNA-binding domain.

It belongs to the class-I aminoacyl-tRNA synthetase family. TyrS type 1 subfamily. In terms of assembly, homodimer.

The protein resides in the cytoplasm. It carries out the reaction tRNA(Tyr) + L-tyrosine + ATP = L-tyrosyl-tRNA(Tyr) + AMP + diphosphate + H(+). Catalyzes the attachment of tyrosine to tRNA(Tyr) in a two-step reaction: tyrosine is first activated by ATP to form Tyr-AMP and then transferred to the acceptor end of tRNA(Tyr). The protein is Tyrosine--tRNA ligase of Buchnera aphidicola subsp. Baizongia pistaciae (strain Bp).